The primary structure comprises 156 residues: Large ribosomal subunit protein bL17 (156 aa).

A disordered region spans residues 127–156 (RATRAAASKKAAEEKAAEAAEEKDEAAEEK). The segment covering 136–146 (KAAEEKAAEAA) has biased composition (basic and acidic residues). A compositionally biased stretch (acidic residues) spans 147–156 (EEKDEAAEEK).

This sequence belongs to the bacterial ribosomal protein bL17 family. In terms of assembly, part of the 50S ribosomal subunit. Contacts protein L32.

The polypeptide is Large ribosomal subunit protein bL17 (Corynebacterium urealyticum (strain ATCC 43042 / DSM 7109)).